Here is a 387-residue protein sequence, read N- to C-terminus: Phosphoglycerate kinase (387 aa).

Residues 21-23 (DLN), Arg-36, 59-62 (HLGR), Arg-113, and Arg-146 contribute to the substrate site. ATP contacts are provided by residues Lys-197, Glu-314, and 340–343 (GGDT).

This sequence belongs to the phosphoglycerate kinase family. In terms of assembly, monomer.

The protein resides in the cytoplasm. It carries out the reaction (2R)-3-phosphoglycerate + ATP = (2R)-3-phospho-glyceroyl phosphate + ADP. It functions in the pathway carbohydrate degradation; glycolysis; pyruvate from D-glyceraldehyde 3-phosphate: step 2/5. The chain is Phosphoglycerate kinase from Pseudomonas aeruginosa (strain ATCC 15692 / DSM 22644 / CIP 104116 / JCM 14847 / LMG 12228 / 1C / PRS 101 / PAO1).